We begin with the raw amino-acid sequence, 1672 residues long: Probable outer membrane protein PmpB (1672 aa).

The signal sequence occupies residues 1 to 14 (MSSMKWLSATAVFA). Disordered regions lie at residues 69–122 (IPVK…GGAF), 203–263 (NTAE…GSGG), 384–415 (EAQT…AKGG), and 734–765 (STGV…PAPA). Low complexity-rich tracts occupy residues 77–88 (DDSSTSTPTTSS), 100–111 (SSSSSPNSGDTS), and 203–234 (NTAE…SKVQ). Composition is skewed to polar residues over residues 235-256 (SLFT…QTPS) and 384-399 (EAQT…SQSG). Low complexity predominate over residues 734–744 (STGVATTATTS). Residues 1379–1672 (DDAAYNNFWV…MTSCGARMIF (294 aa)) form the Autotransporter domain.

This sequence belongs to the PMP outer membrane protein family.

The protein localises to the secreted. It localises to the cell wall. It is found in the cell outer membrane. The polypeptide is Probable outer membrane protein PmpB (pmpB) (Chlamydia muridarum (strain MoPn / Nigg)).